Here is a 292-residue protein sequence, read N- to C-terminus: ATP synthase gamma chain (292 aa).

This sequence belongs to the ATPase gamma chain family. F-type ATPases have 2 components, CF(1) - the catalytic core - and CF(0) - the membrane proton channel. CF(1) has five subunits: alpha(3), beta(3), gamma(1), delta(1), epsilon(1). CF(0) has three main subunits: a, b and c.

It localises to the cell inner membrane. Functionally, produces ATP from ADP in the presence of a proton gradient across the membrane. The gamma chain is believed to be important in regulating ATPase activity and the flow of protons through the CF(0) complex. The chain is ATP synthase gamma chain from Nautilia profundicola (strain ATCC BAA-1463 / DSM 18972 / AmH).